The chain runs to 327 residues: Ferredoxin--NADP reductase (327 aa).

Residues T18, D37, Q45, Y50, A90, F124, D283, and S324 each contribute to the FAD site.

This sequence belongs to the ferredoxin--NADP reductase type 2 family. As to quaternary structure, homodimer. Requires FAD as cofactor.

It catalyses the reaction 2 reduced [2Fe-2S]-[ferredoxin] + NADP(+) + H(+) = 2 oxidized [2Fe-2S]-[ferredoxin] + NADPH. In Saccharopolyspora erythraea (strain ATCC 11635 / DSM 40517 / JCM 4748 / NBRC 13426 / NCIMB 8594 / NRRL 2338), this protein is Ferredoxin--NADP reductase.